Here is a 469-residue protein sequence, read N- to C-terminus: Ribulose bisphosphate carboxylase large chain (469 aa).

K8 is modified (N6,N6,N6-trimethyllysine). Substrate contacts are provided by N117 and T167. K169 acts as the Proton acceptor in catalysis. A substrate-binding site is contributed by K171. Residues K195, D197, and E198 each contribute to the Mg(2+) site. Position 195 is an N6-carboxylysine (K195). H288 (proton acceptor) is an active-site residue. Substrate contacts are provided by R289, H321, and S373.

The protein belongs to the RuBisCO large chain family. Type I subfamily. Heterohexadecamer of 8 large chains and 8 small chains; disulfide-linked. The disulfide link is formed within the large subunit homodimers. Mg(2+) is required as a cofactor. The disulfide bond which can form in the large chain dimeric partners within the hexadecamer appears to be associated with oxidative stress and protein turnover.

Its subcellular location is the plastid. The protein localises to the chloroplast. It carries out the reaction 2 (2R)-3-phosphoglycerate + 2 H(+) = D-ribulose 1,5-bisphosphate + CO2 + H2O. The enzyme catalyses D-ribulose 1,5-bisphosphate + O2 = 2-phosphoglycolate + (2R)-3-phosphoglycerate + 2 H(+). Functionally, ruBisCO catalyzes two reactions: the carboxylation of D-ribulose 1,5-bisphosphate, the primary event in carbon dioxide fixation, as well as the oxidative fragmentation of the pentose substrate in the photorespiration process. Both reactions occur simultaneously and in competition at the same active site. This chain is Ribulose bisphosphate carboxylase large chain, found in Akania bidwillii (Turnipwood).